We begin with the raw amino-acid sequence, 459 residues long: Bifunctional protein GlmU (459 aa).

The pyrophosphorylase stretch occupies residues 1–230; it reads MSNRFAVILA…FDETLGVNDR (230 aa). UDP-N-acetyl-alpha-D-glucosamine contacts are provided by residues 9 to 12, K23, Q73, and 78 to 79; these read LAAG and GT. Mg(2+) is bound at residue D103. Residues G140, E155, N170, and N228 each contribute to the UDP-N-acetyl-alpha-D-glucosamine site. N228 is a binding site for Mg(2+). The linker stretch occupies residues 231 to 251; that stretch reads VALSQAEIIMKNRINRKNMVN. The interval 252 to 459 is N-acetyltransferase; sequence GVTIIDPSNT…VDQLLNKKKS (208 aa). Residues R333 and K351 each coordinate UDP-N-acetyl-alpha-D-glucosamine. Residue H363 is the Proton acceptor of the active site. 2 residues coordinate UDP-N-acetyl-alpha-D-glucosamine: Y366 and N377. Acetyl-CoA-binding positions include 386-387, A423, and R440; that span reads NY.

In the N-terminal section; belongs to the N-acetylglucosamine-1-phosphate uridyltransferase family. It in the C-terminal section; belongs to the transferase hexapeptide repeat family. Homotrimer. The cofactor is Mg(2+).

The protein localises to the cytoplasm. The catalysed reaction is alpha-D-glucosamine 1-phosphate + acetyl-CoA = N-acetyl-alpha-D-glucosamine 1-phosphate + CoA + H(+). It catalyses the reaction N-acetyl-alpha-D-glucosamine 1-phosphate + UTP + H(+) = UDP-N-acetyl-alpha-D-glucosamine + diphosphate. It functions in the pathway nucleotide-sugar biosynthesis; UDP-N-acetyl-alpha-D-glucosamine biosynthesis; N-acetyl-alpha-D-glucosamine 1-phosphate from alpha-D-glucosamine 6-phosphate (route II): step 2/2. It participates in nucleotide-sugar biosynthesis; UDP-N-acetyl-alpha-D-glucosamine biosynthesis; UDP-N-acetyl-alpha-D-glucosamine from N-acetyl-alpha-D-glucosamine 1-phosphate: step 1/1. Its pathway is bacterial outer membrane biogenesis; LPS lipid A biosynthesis. In terms of biological role, catalyzes the last two sequential reactions in the de novo biosynthetic pathway for UDP-N-acetylglucosamine (UDP-GlcNAc). The C-terminal domain catalyzes the transfer of acetyl group from acetyl coenzyme A to glucosamine-1-phosphate (GlcN-1-P) to produce N-acetylglucosamine-1-phosphate (GlcNAc-1-P), which is converted into UDP-GlcNAc by the transfer of uridine 5-monophosphate (from uridine 5-triphosphate), a reaction catalyzed by the N-terminal domain. The protein is Bifunctional protein GlmU of Bacillus anthracis (strain A0248).